Reading from the N-terminus, the 280-residue chain is Chaperone for lacto-N-biosidase (280 aa).

Positions 1 to 37 are cleaved as a signal peptide; sequence MPRRHRFAAAIAAVAVAAVLLVTLTVAVVTHGDGAFA.

In terms of assembly, homodimer.

Its subcellular location is the secreted. In terms of biological role, chaperone required for active expression of the lacto-N-biosidase LnbX. This is Chaperone for lacto-N-biosidase from Bifidobacterium longum subsp. longum (strain ATCC 15707 / DSM 20219 / JCM 1217 / NCTC 11818 / E194b).